Reading from the N-terminus, the 372-residue chain is Glutamate 5-kinase (372 aa).

Lysine 14 is a binding site for ATP. The substrate site is built by serine 54, aspartate 141, and asparagine 153. Residues 173–174 (TD) and 215–221 (TGGMATK) contribute to the ATP site. One can recognise a PUA domain in the interval 280-358 (KGKLVLDVGA…DEIESLLGYD (79 aa)).

This sequence belongs to the glutamate 5-kinase family.

The protein resides in the cytoplasm. It catalyses the reaction L-glutamate + ATP = L-glutamyl 5-phosphate + ADP. The protein operates within amino-acid biosynthesis; L-proline biosynthesis; L-glutamate 5-semialdehyde from L-glutamate: step 1/2. Catalyzes the transfer of a phosphate group to glutamate to form L-glutamate 5-phosphate. In Shewanella woodyi (strain ATCC 51908 / MS32), this protein is Glutamate 5-kinase.